Reading from the N-terminus, the 230-residue chain is 7-cyano-7-deazaguanine synthase (230 aa).

8-18 (LSGGMDSAVVT) is a binding site for ATP. Zn(2+) is bound by residues Cys186, Cys196, Cys199, and Cys202.

This sequence belongs to the QueC family. Zn(2+) is required as a cofactor.

The enzyme catalyses 7-carboxy-7-deazaguanine + NH4(+) + ATP = 7-cyano-7-deazaguanine + ADP + phosphate + H2O + H(+). It participates in purine metabolism; 7-cyano-7-deazaguanine biosynthesis. Catalyzes the ATP-dependent conversion of 7-carboxy-7-deazaguanine (CDG) to 7-cyano-7-deazaguanine (preQ(0)). In Xylella fastidiosa (strain 9a5c), this protein is 7-cyano-7-deazaguanine synthase.